The following is a 600-amino-acid chain: Probable methyltransferase PMT21 (600 aa).

At 1–16 (MKYKDEKYEKAEKGSR) the chain is on the cytoplasmic side. Residues 17-37 (ILPKTVLLILLCGLSFYLGGL) form a helical; Signal-anchor for type II membrane protein membrane-spanning segment. Over 38-600 (YCGKNIIEVS…YSSNASSETN (563 aa)) the chain is Lumenal. N-linked (GlcNAc...) asparagine glycosylation is present at N594.

This sequence belongs to the methyltransferase superfamily.

The protein localises to the endoplasmic reticulum membrane. This chain is Probable methyltransferase PMT21 (ERD3), found in Arabidopsis thaliana (Mouse-ear cress).